The following is a 201-amino-acid chain: Recombination protein RecR (201 aa).

The segment at 57-72 (CCDCRTFTEEERCTIC) adopts a C4-type zinc-finger fold. The Toprim domain occupies 81–176 (GQICVVESPA…AASRIAHGVP (96 aa)).

Belongs to the RecR family.

Its function is as follows. May play a role in DNA repair. It seems to be involved in an RecBC-independent recombinational process of DNA repair. It may act with RecF and RecO. The sequence is that of Recombination protein RecR from Proteus mirabilis (strain HI4320).